The chain runs to 127 residues: NADPH-dependent 7-cyano-7-deazaguanine reductase (127 aa).

The active-site Thioimide intermediate is the C40. The Proton donor role is filled by D47. Residues 62 to 64 (VEL) and 81 to 82 (HE) each bind substrate.

Belongs to the GTP cyclohydrolase I family. QueF type 1 subfamily.

The protein resides in the cytoplasm. It catalyses the reaction 7-aminomethyl-7-carbaguanine + 2 NADP(+) = 7-cyano-7-deazaguanine + 2 NADPH + 3 H(+). It functions in the pathway tRNA modification; tRNA-queuosine biosynthesis. Functionally, catalyzes the NADPH-dependent reduction of 7-cyano-7-deazaguanine (preQ0) to 7-aminomethyl-7-deazaguanine (preQ1). This Campylobacter lari (strain RM2100 / D67 / ATCC BAA-1060) protein is NADPH-dependent 7-cyano-7-deazaguanine reductase.